Consider the following 309-residue polypeptide: Carbamate kinase 2 (309 aa).

It belongs to the carbamate kinase family.

It is found in the cytoplasm. It catalyses the reaction hydrogencarbonate + NH4(+) + ATP = carbamoyl phosphate + ADP + H2O + H(+). The protein operates within metabolic intermediate metabolism; carbamoyl phosphate degradation; CO(2) and NH(3) from carbamoyl phosphate: step 1/1. In Staphylococcus epidermidis (strain ATCC 12228 / FDA PCI 1200), this protein is Carbamate kinase 2 (arcC2).